A 264-amino-acid polypeptide reads, in one-letter code: Thiazole synthase (264 aa).

K106 serves as the catalytic Schiff-base intermediate with DXP. 1-deoxy-D-xylulose 5-phosphate is bound by residues G167, 193 to 194, and 215 to 216; these read AG and NS.

This sequence belongs to the ThiG family. Homotetramer. Forms heterodimers with either ThiH or ThiS.

Its subcellular location is the cytoplasm. It carries out the reaction [ThiS sulfur-carrier protein]-C-terminal-Gly-aminoethanethioate + 2-iminoacetate + 1-deoxy-D-xylulose 5-phosphate = [ThiS sulfur-carrier protein]-C-terminal Gly-Gly + 2-[(2R,5Z)-2-carboxy-4-methylthiazol-5(2H)-ylidene]ethyl phosphate + 2 H2O + H(+). It functions in the pathway cofactor biosynthesis; thiamine diphosphate biosynthesis. Catalyzes the rearrangement of 1-deoxy-D-xylulose 5-phosphate (DXP) to produce the thiazole phosphate moiety of thiamine. Sulfur is provided by the thiocarboxylate moiety of the carrier protein ThiS. In vitro, sulfur can be provided by H(2)S. This chain is Thiazole synthase, found in Prochlorococcus marinus (strain MIT 9301).